The chain runs to 73 residues: Small ribosomal subunit protein bS18 (73 aa).

This sequence belongs to the bacterial ribosomal protein bS18 family. As to quaternary structure, part of the 30S ribosomal subunit. Forms a tight heterodimer with protein bS6.

Binds as a heterodimer with protein bS6 to the central domain of the 16S rRNA, where it helps stabilize the platform of the 30S subunit. The protein is Small ribosomal subunit protein bS18 of Neorickettsia sennetsu (strain ATCC VR-367 / Miyayama) (Ehrlichia sennetsu).